Consider the following 233-residue polypeptide: MGQKVNPIGLRLGINRNWESRWFPTKANLVENIGEDYKIRAFLKRKLYYAGISQILVERTAKKLRVTVVAARPGIIIGKKGSDVDNLRKELQDLIGKDVNINIKEERKAGASAQLAAESVATQLEKRIAFRRAMKKVIQGAQKAGAKGIKVSVSGRLGGAEMARTEWYLEGRVPLHTLRAKIDYGFAEARTTYGNIGVKVWIFKGEVLHKGMQPEKTEESAPAKKPRRTRRGK.

The KH type-2 domain maps to 39-107 (IRAFLKRKLY…DVNINIKEER (69 aa)). Over residues 212–222 (MQPEKTEESAP) the composition is skewed to basic and acidic residues. A disordered region spans residues 212–233 (MQPEKTEESAPAKKPRRTRRGK). Basic residues predominate over residues 224–233 (KKPRRTRRGK).

It belongs to the universal ribosomal protein uS3 family. Part of the 30S ribosomal subunit. Forms a tight complex with proteins S10 and S14.

Functionally, binds the lower part of the 30S subunit head. Binds mRNA in the 70S ribosome, positioning it for translation. The polypeptide is Small ribosomal subunit protein uS3 (Campylobacter jejuni subsp. jejuni serotype O:6 (strain 81116 / NCTC 11828)).